A 194-amino-acid polypeptide reads, in one-letter code: 3-isopropylmalate dehydratase small subunit (194 aa).

It belongs to the LeuD family. LeuD type 1 subfamily. As to quaternary structure, heterodimer of LeuC and LeuD.

It carries out the reaction (2R,3S)-3-isopropylmalate = (2S)-2-isopropylmalate. Its pathway is amino-acid biosynthesis; L-leucine biosynthesis; L-leucine from 3-methyl-2-oxobutanoate: step 2/4. Its function is as follows. Catalyzes the isomerization between 2-isopropylmalate and 3-isopropylmalate, via the formation of 2-isopropylmaleate. The protein is 3-isopropylmalate dehydratase small subunit of Halalkalibacterium halodurans (strain ATCC BAA-125 / DSM 18197 / FERM 7344 / JCM 9153 / C-125) (Bacillus halodurans).